Here is a 188-residue protein sequence, read N- to C-terminus: Ribosome maturation factor RimP (188 aa).

It belongs to the RimP family.

It localises to the cytoplasm. Functionally, required for maturation of 30S ribosomal subunits. This is Ribosome maturation factor RimP from Corynebacterium aurimucosum (strain ATCC 700975 / DSM 44827 / CIP 107346 / CN-1) (Corynebacterium nigricans).